Reading from the N-terminus, the 524-residue chain is Cytochrome P450 monooxygenase oblB (524 aa).

3 helical membrane-spanning segments follow: residues 18-38 (ILNAGIAIAGLSAAYAIGLVI), 225-245 (FHSGVVTLPLFMGLPWLIHLI), and 322-342 (VLIGSGTMTTAGTMCFLVYYI). Cys-466 is a binding site for heme.

The protein belongs to the cytochrome P450 family. It depends on heme as a cofactor.

It is found in the membrane. It carries out the reaction ophiobolin F + 4 reduced [NADPH--hemoprotein reductase] + 4 O2 = ophiobolin C + 4 oxidized [NADPH--hemoprotein reductase] + 6 H2O + 4 H(+). The protein operates within secondary metabolite biosynthesis; terpenoid biosynthesis. Cytochrome P450 monooxygenase; part of the gene cluster that mediates the biosynthesis of the sesterterpenes ophiobolins, fungal phytotoxins with potential anti-cancer activities. The first step of the pathway is performed by the sesterterpene synthase oblA that possesses both prenyl transferase and terpene cyclase activity, converting isopentenyl diphosphate and dimethylallyl diphosphate into geranylfarnesyl diphosphate (GFPP) and further converting GFPP into ophiobolin F, respectively. Other sesterterpenoids (C(25) terpenoids) are found as minor products of oblA. The cytochrome P450 monooxygenase oblB then catalyzes a four-step oxidative transformation of ophiobolin F to yield ophiobolin C. The FAD-dependent oxidoreductase oblC might be involved in a later oxidation step that produces ophiobolin A. This chain is Cytochrome P450 monooxygenase oblB, found in Cochliobolus heterostrophus (strain C5 / ATCC 48332 / race O) (Southern corn leaf blight fungus).